The primary structure comprises 166 residues: Transcription factor HES-5 (166 aa).

Residues 16–72 (KNRLRKPVVEKMRRDRINSSIEQLKLLLEQEFARHQPNSKLEKADILEMAVSYLKHS) enclose the bHLH domain. The Orange domain maps to 88-119 (YSEGYSWCLQEAVQFLTLHAASDTQMKLLYHF). Residues 125–166 (PAAPVKETPTPGAAPQPARSSTKAAASVSTSRQSACGLWRPW) are disordered. Residues 142-156 (ARSSTKAAASVSTSR) are compositionally biased toward low complexity. The WRPW motif signature appears at 163-166 (WRPW).

Transcription repression requires formation of a complex with a corepressor protein of the Groucho/TLE family. As to expression, expressed predominantly in embryonic neural lineage cells.

Its subcellular location is the nucleus. In terms of biological role, transcriptional repressor of genes that require a bHLH protein for their transcription. Plays an important role as neurogenesis negative regulator. In Rattus norvegicus (Rat), this protein is Transcription factor HES-5 (Hes5).